The primary structure comprises 473 residues: tRNA modification GTPase MnmE (473 aa).

Residues R31, E95, and R134 each contribute to the (6S)-5-formyl-5,6,7,8-tetrahydrofolate site. The TrmE-type G domain maps to 230–394; sequence GVSTVIAGKP…LKQHMGDLVK (165 aa). GTP is bound by residues 240 to 245, 259 to 265, and 284 to 287; these read NAGKST, SHMPGTT, and DTAG. 2 residues coordinate Mg(2+): S244 and T265. K473 contacts (6S)-5-formyl-5,6,7,8-tetrahydrofolate.

The protein belongs to the TRAFAC class TrmE-Era-EngA-EngB-Septin-like GTPase superfamily. TrmE GTPase family. In terms of assembly, homodimer. Heterotetramer of two MnmE and two MnmG subunits. The cofactor is K(+).

It localises to the cytoplasm. Exhibits a very high intrinsic GTPase hydrolysis rate. Involved in the addition of a carboxymethylaminomethyl (cmnm) group at the wobble position (U34) of certain tRNAs, forming tRNA-cmnm(5)s(2)U34. The sequence is that of tRNA modification GTPase MnmE from Chlorobaculum tepidum (strain ATCC 49652 / DSM 12025 / NBRC 103806 / TLS) (Chlorobium tepidum).